Here is a 220-residue protein sequence, read N- to C-terminus: Protein-methionine-sulfoxide reductase heme-binding subunit MsrQ (220 aa).

Transmembrane regions (helical) follow at residues 20-40, 51-71, 86-106, 122-142, 153-173, and 175-195; these read LWLL…LGAT, FEHL…LVTP, ALGL…MVLD, PFIT…LTSN, WSSL…HFLM, and VKSW…LLLW.

The protein belongs to the MsrQ family. Heterodimer of a catalytic subunit (MsrP) and a heme-binding subunit (MsrQ). FMN serves as cofactor. Requires heme b as cofactor.

The protein localises to the cell inner membrane. Part of the MsrPQ system that repairs oxidized periplasmic proteins containing methionine sulfoxide residues (Met-O), using respiratory chain electrons. Thus protects these proteins from oxidative-stress damage caused by reactive species of oxygen and chlorine generated by the host defense mechanisms. MsrPQ is essential for the maintenance of envelope integrity under bleach stress, rescuing a wide series of structurally unrelated periplasmic proteins from methionine oxidation. MsrQ provides electrons for reduction to the reductase catalytic subunit MsrP, using the quinone pool of the respiratory chain. This Brucella melitensis biotype 2 (strain ATCC 23457) protein is Protein-methionine-sulfoxide reductase heme-binding subunit MsrQ.